We begin with the raw amino-acid sequence, 294 residues long: tRNA pseudouridine synthase A (294 aa).

Aspartate 64 functions as the Nucleophile in the catalytic mechanism. Position 122 (tyrosine 122) interacts with substrate.

It belongs to the tRNA pseudouridine synthase TruA family. Homodimer.

The enzyme catalyses uridine(38/39/40) in tRNA = pseudouridine(38/39/40) in tRNA. Its function is as follows. Formation of pseudouridine at positions 38, 39 and 40 in the anticodon stem and loop of transfer RNAs. The chain is tRNA pseudouridine synthase A from Synechococcus sp. (strain ATCC 27144 / PCC 6301 / SAUG 1402/1) (Anacystis nidulans).